We begin with the raw amino-acid sequence, 625 residues long: MATKPGVLTDWPWTPLGSFKYIVIAPWAVHSTYRFVTDDPEKRDLGYFLVFPFLLFRILHNQVWISLSRYYTSSGKRRIVDKGIDFNQVDRETNWDDQILFNGVLFYIGINLLPEAKQLPWWRTDGVLMAALIHTGPVEFLYYWLHKALHHHFLYSRYHSHHHSSIVTEPITSVIHPFAEHIAYFILFAIPLLTTLLTKTASIISFAGYIIYIDFMNNMGHCNFELIPKRLFHLFPPLKFLCYTPSYHSLHHTQFRTNYSLFMPLYDYIYGTMDESTDTLYEKTLERGDDIVDVVHLTHLTTPESIYHLRIGLASFASYPFAYRWFMRLLWPFTSLSMIFTLFYARLFVAERNSFNKLNLQSWVIPRYNLQYLLKWRKEAINNMIEKAILEADKKGVKVLSLGLMNQGEELNRNGEVYIHNHPDMKVRLVDGSRLAAAVVINSVPKATTSVVMTGNLTKVAYTIASALCQRGVQVSTLRLDEYEKIRSCVPQECRDHLVYLTSEALSSNKVWLVGEGTTREEQEKATKGTLFIPFSQFPLKQLRRDCIYHTTPALIVPKSLVNVHSCENWLPRKAMSATRVAGILHALEGWEMHECGTSLLLSDLDQVWEACLSHGFQPLLLPHH.

5 helical membrane-spanning segments follow: residues 45–65 (LGYFLVFPFLLFRILHNQVWI), 126–146 (GVLMAALIHTGPVEFLYYWLH), 177–197 (PFAEHIAYFILFAIPLLTTLL), 200–220 (TASIISFAGYIIYIDFMNNMG), and 329–349 (LLWPFTSLSMIFTLFYARLFV). Residues 138-272 (VEFLYYWLHK…MPLYDYIYGT (135 aa)) form the Fatty acid hydroxylase domain.

This sequence belongs to the sterol desaturase family. In terms of assembly, homodimer. Interacts with CER3, CYTB5-B, CYTB5-C, CYTB5-D and CYTB5-E. As to expression, expressed in seedlings, stems, leaves, flowers, fruits and siliques. Not detected in roots, pollen and seeds. Expressed in trichomes, cotyledons, shoot apical meristem and leaf primordia. Preferentially associated with young leaves rather than mature leaves. Expressed in the epidermis of the stem and caulines leaves, in the carpels and the sepals.

The protein resides in the endoplasmic reticulum membrane. The catalysed reaction is a long-chain fatty aldehyde + 2 NADPH + O2 + H(+) = a long-chain alkane + formate + 2 NADP(+) + H2O. Aldehyde decarbonylase involved in the conversion of aldehydes to alkanes. Core component of a very-long-chain alkane synthesis complex. Involved in epicuticular wax biosynthesis and pollen fertility. This chain is Very-long-chain aldehyde decarbonylase CER1 (CER1), found in Arabidopsis thaliana (Mouse-ear cress).